The chain runs to 92 residues: Small ribosomal subunit protein uS19 (92 aa).

Belongs to the universal ribosomal protein uS19 family.

Protein S19 forms a complex with S13 that binds strongly to the 16S ribosomal RNA. This is Small ribosomal subunit protein uS19 from Nitrobacter hamburgensis (strain DSM 10229 / NCIMB 13809 / X14).